The chain runs to 576 residues: Acyl-CoA ligase sidI (576 aa).

The PTS2-type peroxisomal targeting signal motif lies at 3-11; the sequence is PVTTKTIRP. ATP contacts are provided by Asp439, Arg454, and Lys553.

Belongs to the ATP-dependent AMP-binding enzyme family.

Its subcellular location is the peroxisome. The protein operates within siderophore biosynthesis. In terms of biological role, acyl-CoA ligase; part of the gene cluster that mediates the biosynthesis of at least 11 siderophores, including beauverichelin A, dimerumic acid (DA), Na-dimethyl coprogen (NADC), eleutherazine B, ferricrocin (FC), fusarinine A, fusarinine C (FsC), metachelin A, mevalonolactone, rhodotorulic acid (RA) and tenellin. This cocktail of siderophores for iron metabolism is essential for virulence, and more specifically for the fungal virulence in penetrating through the host cuticle. Siderophore synthesis is also involved in conidial germination under iron-deficient conditions. For biosynthesis of fusarinine C, the transacylase SIDF transfers anhydromevalonyl to N(5)-hydroxyornithine. The required anhydromevalonyl-CoA moiety is derived from mevalonate by CoA ligation and dehydration catalyzed by SIDI and sidH respectively. The chain is Acyl-CoA ligase sidI from Beauveria bassiana (strain ARSEF 2860) (White muscardine disease fungus).